A 488-amino-acid polypeptide reads, in one-letter code: UDP-N-acetylmuramate--L-alanine ligase (488 aa).

127–133 contacts ATP; it reads GTHGKTT.

It belongs to the MurCDEF family.

The protein resides in the cytoplasm. The catalysed reaction is UDP-N-acetyl-alpha-D-muramate + L-alanine + ATP = UDP-N-acetyl-alpha-D-muramoyl-L-alanine + ADP + phosphate + H(+). Its pathway is cell wall biogenesis; peptidoglycan biosynthesis. In terms of biological role, cell wall formation. The protein is UDP-N-acetylmuramate--L-alanine ligase of Shewanella baltica (strain OS223).